The chain runs to 441 residues: Deoxyguanosinetriphosphate triphosphohydrolase-like protein 1 (441 aa).

The HD domain maps to 62–255 (RLTHSLEAAQ…MELADDIAYG (194 aa)).

The protein belongs to the dGTPase family. Type 2 subfamily.

The polypeptide is Deoxyguanosinetriphosphate triphosphohydrolase-like protein 1 (Vibrio cholerae serotype O1 (strain ATCC 39315 / El Tor Inaba N16961)).